A 339-amino-acid chain; its full sequence is Glycerol-3-phosphate dehydrogenase [NAD(P)+] (339 aa).

NADPH is bound by residues S15, Y16, H36, and K110. Sn-glycerol 3-phosphate-binding residues include K110, G139, and T141. A143 is a binding site for NADPH. Sn-glycerol 3-phosphate is bound by residues K195, D248, S258, R259, and N260. K195 acts as the Proton acceptor in catalysis. R259 is a binding site for NADPH. The NADPH site is built by V283 and E285.

It belongs to the NAD-dependent glycerol-3-phosphate dehydrogenase family.

Its subcellular location is the cytoplasm. The catalysed reaction is sn-glycerol 3-phosphate + NAD(+) = dihydroxyacetone phosphate + NADH + H(+). It catalyses the reaction sn-glycerol 3-phosphate + NADP(+) = dihydroxyacetone phosphate + NADPH + H(+). It functions in the pathway membrane lipid metabolism; glycerophospholipid metabolism. In terms of biological role, catalyzes the reduction of the glycolytic intermediate dihydroxyacetone phosphate (DHAP) to sn-glycerol 3-phosphate (G3P), the key precursor for phospholipid synthesis. This chain is Glycerol-3-phosphate dehydrogenase [NAD(P)+], found in Pectobacterium carotovorum subsp. carotovorum (strain PC1).